Consider the following 104-residue polypeptide: ATP-dependent Clp protease adapter protein ClpS (104 aa).

Belongs to the ClpS family. As to quaternary structure, binds to the N-terminal domain of the chaperone ClpA.

Its function is as follows. Involved in the modulation of the specificity of the ClpAP-mediated ATP-dependent protein degradation. The protein is ATP-dependent Clp protease adapter protein ClpS of Burkholderia mallei (strain NCTC 10247).